Here is a 598-residue protein sequence, read N- to C-terminus: Elongation factor 4 (598 aa).

Residues 4–181 (KKIRNFAIIA…AIVNLIPPPQ (178 aa)) form the tr-type G domain. GTP contacts are provided by residues 16–21 (DHGKST) and 128–131 (NKID).

It belongs to the TRAFAC class translation factor GTPase superfamily. Classic translation factor GTPase family. LepA subfamily.

It localises to the cell membrane. The enzyme catalyses GTP + H2O = GDP + phosphate + H(+). Required for accurate and efficient protein synthesis under certain stress conditions. May act as a fidelity factor of the translation reaction, by catalyzing a one-codon backward translocation of tRNAs on improperly translocated ribosomes. Back-translocation proceeds from a post-translocation (POST) complex to a pre-translocation (PRE) complex, thus giving elongation factor G a second chance to translocate the tRNAs correctly. Binds to ribosomes in a GTP-dependent manner. In Mesomycoplasma hyopneumoniae (strain 7448) (Mycoplasma hyopneumoniae), this protein is Elongation factor 4.